We begin with the raw amino-acid sequence, 261 residues long: Large ribosomal subunit protein uL3 (261 aa).

Over residues 138–148 the composition is skewed to low complexity; that stretch reads SVSHRSHGSTG. Disordered regions lie at residues 138-163 and 214-261; these read SVSH…KKMA and ADAP…GDQA. An N5-methylglutamine modification is found at Q151. Residues 227–261 show a composition bias toward low complexity; the sequence is APTPVEAAADEAAPAEEPAVTEAPAAEATEAGDQA.

The protein belongs to the universal ribosomal protein uL3 family. In terms of assembly, part of the 50S ribosomal subunit. Forms a cluster with proteins L14 and L19. Methylated by PrmB.

One of the primary rRNA binding proteins, it binds directly near the 3'-end of the 23S rRNA, where it nucleates assembly of the 50S subunit. The polypeptide is Large ribosomal subunit protein uL3 (Phenylobacterium zucineum (strain HLK1)).